A 116-amino-acid chain; its full sequence is Putative UPF0320 protein YLL065W (116 aa).

It belongs to the UPF0320 family.

This chain is Putative UPF0320 protein YLL065W, found in Saccharomyces cerevisiae (strain ATCC 204508 / S288c) (Baker's yeast).